The primary structure comprises 134 residues: Translation initiation factor 2 subunit beta (134 aa).

Residues 1-12 (MEYDDMLDRAME) are compositionally biased toward basic and acidic residues. The tract at residues 1-28 (MEYDDMLDRAMEETPEIDGTSERFEVPD) is disordered.

The protein belongs to the eIF-2-beta/eIF-5 family. In terms of assembly, heterotrimer composed of an alpha, a beta and a gamma chain.

Its function is as follows. eIF-2 functions in the early steps of protein synthesis by forming a ternary complex with GTP and initiator tRNA. The chain is Translation initiation factor 2 subunit beta from Haloarcula marismortui (strain ATCC 43049 / DSM 3752 / JCM 8966 / VKM B-1809) (Halobacterium marismortui).